The primary structure comprises 162 residues: Photosystem II extrinsic protein V (162 aa).

The signal sequence occupies residues 1-26 (MFNKNFWTSIIIGCLFCTITYSGVNA). Heme c is bound by residues C62, C65, H66, and H117.

Belongs to the cytochrome c family. PsbV subfamily. As to quaternary structure, PSII is composed of 1 copy each of membrane proteins PsbA, PsbB, PsbC, PsbD, PsbE, PsbF, PsbH, PsbI, PsbJ, PsbK, PsbL, PsbM, PsbT, PsbX, PsbY, PsbZ, Psb30/Ycf12, at least 3 peripheral proteins of the oxygen-evolving complex and a large number of cofactors. It forms dimeric complexes. The cofactor is heme c.

Its subcellular location is the plastid. It is found in the cyanelle thylakoid membrane. In terms of biological role, one of the extrinsic, lumenal subunits of photosystem II (PSII). PSII is a light-driven water plastoquinone oxidoreductase, using light energy to abstract electrons from H(2)O, generating a proton gradient subsequently used for ATP formation. The extrinsic proteins stabilize the structure of photosystem II oxygen-evolving complex (OEC), the ion environment of oxygen evolution and protect the OEC against heat-induced inactivation. The sequence is that of Photosystem II extrinsic protein V from Cyanophora paradoxa.